A 618-amino-acid polypeptide reads, in one-letter code: uncharacterized protein (618 aa).

The disordered stretch occupies residues 1 to 45 (MSSKSASKLKREAKKAERLAAKGESVKPSKKNGTKNGKDKEVDGV). 2 stretches are compositionally biased toward basic and acidic residues: residues 14–27 (KKAE…ESVK) and 36–45 (NGKDKEVDGV). Phosphoserine is present on residues Ser-50 and Ser-53. Thr-54 is modified (phosphothreonine). Residues Ser-55 and Ser-64 each carry the phosphoserine modification. 2 ABC transporter domains span residues 76 to 325 (IKID…LKQQ) and 388 to 609 (IAFN…QSRD). ATP is bound by residues 108–115 (GDNGSGKS) and 423–430 (GKNGTGKS).

Belongs to the ABC transporter superfamily.

The protein resides in the cytoplasm. This is an uncharacterized protein from Schizosaccharomyces pombe (strain 972 / ATCC 24843) (Fission yeast).